A 717-amino-acid chain; its full sequence is Putative amino acid transporter AAT1 (717 aa).

Basic and acidic residues predominate over residues 1–10 (MREGAFDASR). Residues 1 to 88 (MREGAFDASR…DRAQTDSRQE (88 aa)) form a disordered region. Residues 16–25 (QRPSSLSTAQ) show a composition bias toward polar residues. The span at 26 to 53 (PPSDSRPPSSSSPPSSSSSSSSASSSSP) shows a compositional bias: low complexity. Residues 74 to 88 (SAEKMDRAQTDSRQE) are compositionally biased toward basic and acidic residues. 8 consecutive transmembrane segments (helical) span residues 124-143 (VLTL…PYAM), 149-170 (LIGL…YILM), 196-216 (AVDA…LVFL), 236-253 (HRAA…PLSV), 265-283 (FFPV…YRSL), 303-320 (FKSF…INVC), 341-358 (AALL…LGYL), and 378-402 (LMHV…IPTV). Residues 462 to 602 (GDAEYGGAEA…REEREEREGQ (141 aa)) are disordered. A compositionally biased stretch (low complexity) spans 463-477 (DAEYGGAEAGEATRG). Positions 497-519 (ARNRDRSRLHADSERSAGDREGS) are enriched in basic and acidic residues. The segment covering 547–558 (GSSSASSRSVDS) has biased composition (low complexity). Over residues 584–602 (SGDREAREEREEREEREGQ) the composition is skewed to basic and acidic residues. 3 helical membrane passes run 622–638 (VCVA…ALVL), 644–669 (VVGL…YAGI), and 681–702 (LLMV…IIIL).

This sequence belongs to the amino acid/polyamine transporter 2 family.

It localises to the vacuole membrane. In terms of biological role, putative amino acid transporter. Probably transports arginine. Involved in maintaining the osmotic homeostasis of the digestive vacuole. Required for extracellular parasite survival and bradyzoite differentiation. The polypeptide is Putative amino acid transporter AAT1 (Toxoplasma gondii (strain ATCC 50611 / Me49)).